A 233-amino-acid chain; its full sequence is Synaptogyrin-1 (233 aa).

Methionine 1 is modified (N-acetylmethionine). The Cytoplasmic portion of the chain corresponds to 1-23 (MEGGAYGAGKAGGAFDPYTLVRQ). Positions 20–173 (LVRQPHTILR…QAVLAFQRYQ (154 aa)) constitute an MARVEL domain. The helical transmembrane segment at 24-44 (PHTILRVVSWLFSIVVFGSIV) threads the bilayer. Residues 45 to 71 (NEGYLNSASEGEEFCIYNRNPNACSYG) are Lumenal-facing. A helical membrane pass occupies residues 72–92 (VAVGVLAFLTCLLYLALDVYF). At 93-103 (PQISSVKDRKK) the chain is on the cytoplasmic side. Residues 104-124 (AVLSDIGVSAFWAFLWFVGFC) traverse the membrane as a helical segment. Residues 125-148 (YLANQWQVSKPKDNPLNEGTDAAR) lie on the Lumenal side of the membrane. The helical transmembrane segment at 149–169 (AAIAFSFFSIFTWAGQAVLAF) threads the bilayer. Topologically, residues 170–233 (QRYQIGADSA…EPQGYQSQGY (64 aa)) are cytoplasmic. A disordered region spans residues 194–233 (MPYAPYVEPTGPDPAGMGGTYQQPANTFDTEPQGYQSQGY). Over residues 213–233 (TYQQPANTFDTEPQGYQSQGY) the composition is skewed to polar residues.

Belongs to the synaptogyrin family.

Its subcellular location is the cytoplasmic vesicle. The protein localises to the secretory vesicle. It is found in the synaptic vesicle membrane. It localises to the melanosome. Functionally, may play a role in regulated exocytosis. Modulates the localization of synaptophysin/SYP into synaptic-like microvesicles and may therefore play a role in synaptic-like microvesicle formation and/or maturation. Involved in the regulation of short-term and long-term synaptic plasticity. This is Synaptogyrin-1 from Homo sapiens (Human).